Here is a 292-residue protein sequence, read N- to C-terminus: Coatomer subunit epsilon (292 aa).

The protein belongs to the COPE family. Oligomeric complex that consists of at least the alpha, beta, beta', gamma, delta, epsilon and zeta subunits.

It is found in the cytoplasm. Its subcellular location is the golgi apparatus membrane. It localises to the cytoplasmic vesicle. The protein resides in the COPI-coated vesicle membrane. Its function is as follows. The coatomer is a cytosolic protein complex that binds to dilysine motifs and reversibly associates with Golgi non-clathrin-coated vesicles, which further mediate biosynthetic protein transport from the ER, via the Golgi up to the trans Golgi network. The coatomer complex is required for budding from Golgi membranes, and is essential for the retrograde Golgi-to-ER transport of dilysine-tagged proteins. In Caenorhabditis elegans, this protein is Coatomer subunit epsilon (cope-1).